Reading from the N-terminus, the 200-residue chain is NADH-quinone oxidoreductase subunit C (200 aa).

Belongs to the complex I 30 kDa subunit family. NDH-1 is composed of 14 different subunits. Subunits NuoB, C, D, E, F, and G constitute the peripheral sector of the complex.

It localises to the cell inner membrane. It carries out the reaction a quinone + NADH + 5 H(+)(in) = a quinol + NAD(+) + 4 H(+)(out). Functionally, NDH-1 shuttles electrons from NADH, via FMN and iron-sulfur (Fe-S) centers, to quinones in the respiratory chain. The immediate electron acceptor for the enzyme in this species is believed to be ubiquinone. Couples the redox reaction to proton translocation (for every two electrons transferred, four hydrogen ions are translocated across the cytoplasmic membrane), and thus conserves the redox energy in a proton gradient. This is NADH-quinone oxidoreductase subunit C from Burkholderia multivorans (strain ATCC 17616 / 249).